Consider the following 66-residue polypeptide: Large ribosomal subunit protein bL35 (66 aa).

Positions Met1–Lys15 are enriched in basic residues. Positions Met1–Gly32 are disordered.

This sequence belongs to the bacterial ribosomal protein bL35 family.

The polypeptide is Large ribosomal subunit protein bL35 (Dinoroseobacter shibae (strain DSM 16493 / NCIMB 14021 / DFL 12)).